Reading from the N-terminus, the 376-residue chain is tRNA-specific 2-thiouridylase MnmA (376 aa).

Residues 17–24 (GMSGGVDS) and M43 contribute to the ATP site. The tract at residues 103–105 (NPD) is interaction with target base in tRNA. C108 serves as the catalytic Nucleophile. Cysteines 108 and 204 form a disulfide. Residue G132 coordinates ATP. Residues 154-156 (KDQ) form an interaction with tRNA region. Catalysis depends on C204, which acts as the Cysteine persulfide intermediate. The tract at residues 316-317 (RY) is interaction with tRNA.

This sequence belongs to the MnmA/TRMU family.

Its subcellular location is the cytoplasm. It catalyses the reaction S-sulfanyl-L-cysteinyl-[protein] + uridine(34) in tRNA + AH2 + ATP = 2-thiouridine(34) in tRNA + L-cysteinyl-[protein] + A + AMP + diphosphate + H(+). Its function is as follows. Catalyzes the 2-thiolation of uridine at the wobble position (U34) of tRNA, leading to the formation of s(2)U34. The chain is tRNA-specific 2-thiouridylase MnmA from Pseudomonas savastanoi pv. phaseolicola (strain 1448A / Race 6) (Pseudomonas syringae pv. phaseolicola (strain 1448A / Race 6)).